Here is a 267-residue protein sequence, read N- to C-terminus: 2-keto-3-deoxy-L-rhamnonate aldolase (267 aa).

The active-site Proton acceptor is H49. Q151 contacts substrate. E153 contacts Mg(2+). 2 residues coordinate substrate: A178 and D179. D179 provides a ligand contact to Mg(2+).

The protein belongs to the HpcH/HpaI aldolase family. KDR aldolase subfamily. Homohexamer. Mg(2+) serves as cofactor.

The enzyme catalyses 2-dehydro-3-deoxy-L-rhamnonate = (S)-lactaldehyde + pyruvate. Functionally, catalyzes the reversible retro-aldol cleavage of 2-keto-3-deoxy-L-rhamnonate (KDR) to pyruvate and lactaldehyde. The sequence is that of 2-keto-3-deoxy-L-rhamnonate aldolase from Salmonella gallinarum (strain 287/91 / NCTC 13346).